The chain runs to 553 residues: MAGINRAGPSGAYFVGHTDPEPVSGQAHGSGSGASSSNSPQVQPRPSNTPPSNAPAPPPTGRERLSRSTALSRQTREWLEQGMPTAEDASVRRRPQVTADAATPRAEARRTPEATADASAPRRGAVAHANSIVQQLVSEGADISHTRNMLRNAMNGDAVAFSRVEQNIFRQHFPNMPMHGISRDSELAIELRGALRRAVHQQAASAPVRSPTPTPASPAASSSGSSQRSLFGRFARLMAPNQGRSSNTAASQTPVDRSPPRVNQRPIRVDRAAMRNRGNDEADAALRGLVQQGVNLEHLRTALERHVMQRLPIPLDIGSALQNVGINPSIDLGESLVQHPLLNLNVALNRMLGLRPSAERAPRPAVPVAPATASRRPDGTRATRLRVMPEREDYENNVAYGVRLLNLNPGVGVRQAVAAFVTDRAERPAVVANIRAALDPIASQFSQLRTISKADAESEELGFKDAADHHTDDVTHCLFGGELSLSNPDQQVIGLAGNPTDTSQPYSQEGNKDLAFMDMKKLAQFLAGKPEHPMTRETLNAENIAKYAFRIVP.

Disordered regions lie at residues 1 to 123 (MAGI…APRR), 198 to 227 (AVHQ…GSSQ), and 239 to 275 (APNQ…AAMR). Residues 1-308 (MAGINRAGPS…LRTALERHVM (308 aa)) form a host recognition; Pto interaction region. The span at 24–39 (SGQAHGSGSGASSSNS) shows a compositional bias: low complexity. Positions 47 to 60 (SNTPPSNAPAPPPT) are enriched in pro residues. Positions 217–227 (SPAASSSGSSQ) are enriched in low complexity. Over residues 242-255 (QGRSSNTAASQTPV) the composition is skewed to polar residues. Residues 309 to 553 (QRLPIPLDIG…IAKYAFRIVP (245 aa)) are E3 ubiquitin-protein ligase. The Interaction with Pto-kinase signature appears at 325–328 (GINP). The disordered stretch occupies residues 361–380 (APRPAVPVAPATASRRPDGT). The interval 512 to 529 (KDLAFMDMKKLAQFLAGK) is required for E3 ubiquitin-protein ligase and anti-PCD activities and pathogenesis.

Belongs to the HopAB family. As to quaternary structure, interacts physically with plant cell Pto. Post-translationally, auto-ubiquitinated.

It localises to the secreted. Effector protein involved in gene-for-gene resistance in tomato plants. It is recognized by the host Pto resistance protein and elicits Pto and Prf-dependent hypersensitive response (HR) and programmed cell death (PCD), resulting in host immunity. In susceptible plants, acts as a virulence factor by suppressing PCD and HR-based plant immunity. This function requires its E3 ubiquitin ligase activity probably by recruiting E2 enzymes and transferring ubiquitin molecules to cellular proteins involved in regulation of PCD and targeting them for degradation. Also, induces expression of host genes involved in ethylene biosynthesis and signaling, in particular ACO1 and ACO2, encoding the ethylene-forming enzyme ACC oxidase. This chain is Effector protein HopAB2 (hopAB2), found in Pseudomonas syringae pv. tomato (strain ATCC BAA-871 / DC3000).